We begin with the raw amino-acid sequence, 362 residues long: Hepatic sodium/bile acid cotransporter (362 aa).

Residues 1–22 (MEVHNVSAPFNFSLPPGFGHRA) are Extracellular-facing. 2 N-linked (GlcNAc...) asparagine glycosylation sites follow: Asn-5 and Asn-11. Residues 23–44 (TDKALSIILVLMLLLIMLSLGC) form a helical membrane-spanning segment. Over 45 to 47 (TME) the chain is Cytoplasmic. Residues 48–83 (FSKIKAHLWKPKGVIVALVAQFGIMPLAAFLLGKIF) traverse the membrane as a helical segment. Residues 84-86 (HLS) lie on the Extracellular side of the membrane. Residues 87-112 (NIEALAILICGCSPGGNLSNLFTLAM) traverse the membrane as a discontinuously helical segment. Residues 113 to 115 (KGD) are Cytoplasmic-facing. The helical transmembrane segment at 116-142 (MNLSIVMTTCSSFSALGMMPLLLYVYS) threads the bilayer. Residues 143-156 (KGIYDGDLKDKVPY) lie on the Extracellular side of the membrane. Residues 157–179 (KGIMISLVIVLIPCTIGIVLKSK) traverse the membrane as a helical segment. Residues 180-183 (RPHY) lie on the Cytoplasmic side of the membrane. Residues 184-217 (VPYILKGGMIITFLLSVAVTALSVINVGNSIMFV) form a helical membrane-spanning segment. At 218–219 (MT) the chain is on the extracellular side. Residues 220–243 (PHLLATSSLMPFSGFLMGYILSAL) form a helical membrane-spanning segment. The Cytoplasmic segment spans residues 244–247 (FQLN). A discontinuously helical transmembrane segment spans residues 248–273 (PSCRRTISMETGFQNIQLCSTILNVT). The Extracellular portion of the chain corresponds to 274 to 280 (FPPEVIG). A helical membrane pass occupies residues 281–311 (PLFFFPLLYMIFQLAEGLLIIIIFRCYEKIK). Residues 312–362 (PPKDQTKITYKAAATEDATPAALEKGTHNGNIPPLQPGPSPNGLNSGQMAN) are Cytoplasmic-facing. Residue Thr-330 is modified to Phosphothreonine. Residues 333–362 (ALEKGTHNGNIPPLQPGPSPNGLNSGQMAN) form a disordered region. The span at 353-362 (NGLNSGQMAN) shows a compositional bias: polar residues.

Belongs to the bile acid:sodium symporter (BASS) (TC 2.A.28) family. In terms of tissue distribution, highly expressed in liver and low expression in kidney.

The protein resides in the cell membrane. The catalysed reaction is taurocholate(out) + 2 Na(+)(out) = taurocholate(in) + 2 Na(+)(in). The enzyme catalyses taurochenodeoxycholate(out) + 2 Na(+)(out) = taurochenodeoxycholate(in) + 2 Na(+)(in). It carries out the reaction tauroursodeoxycholate(out) + 2 Na(+)(out) = tauroursodeoxycholate(in) + 2 Na(+)(in). It catalyses the reaction glycocholate(out) + 2 Na(+)(out) = glycocholate(in) + 2 Na(+)(in). The catalysed reaction is estrone 3-sulfate(out) + 2 Na(+)(out) = estrone 3-sulfate(in) + 2 Na(+)(in). The enzyme catalyses cholate(out) + 2 Na(+)(out) = cholate(in) + 2 Na(+)(in). It carries out the reaction tauronorcholate(out) + 2 Na(+)(out) = tauronorcholate(in) + 2 Na(+)(in). It catalyses the reaction taurodeoxycholate(out) + 2 Na(+)(out) = taurodeoxycholate(in) + 2 Na(+)(in). The catalysed reaction is tauroallocholate(out) + 2 Na(+)(out) = tauroallocholate(in) + 2 Na(+)(in). The enzyme catalyses taurohyodeoxycholate(out) + 2 Na(+)(out) = taurohyodeoxycholate(in) + 2 Na(+)(in). It carries out the reaction taurohyocholate(out) + 2 Na(+)(out) = taurohyocholate(in) + 2 Na(+)(in). It catalyses the reaction tauro-beta-muricholate(out) + 2 Na(+)(out) = tauro-beta-muricholate(in) + 2 Na(+)(in). With respect to regulation, the transport of bile acids is sodium-dependent. Its function is as follows. As a major transporter of conjugated bile salts from plasma into the hepatocyte, it plays a key role in the enterohepatic circulation of bile salts necessary for the solubilization and absorption of dietary fat and fat-soluble vitamins. It is strictly dependent on the extracellular presence of sodium. It exhibits broad substrate specificity and transports various bile acids, such as taurocholate, cholate, as well as non-bile acid organic compounds, such as estrone sulfate. Works collaboratively with the ileal transporter (NTCP2), the organic solute transporter (OST), and the bile salt export pump (BSEP), to ensure efficacious biological recycling of bile acids during enterohepatic circulation. The protein is Hepatic sodium/bile acid cotransporter (Slc10a1) of Rattus norvegicus (Rat).